The following is a 347-amino-acid chain: MRIDDLTQRLRALGAKPAHEQRVLRAWVQRSSMDNRRQAAKDFLPLALREALPALTAELEGLARLRSQHPGEDGSARLLVELADGQTVESVLLLRDGLCVSTQLGCAVGCVFCMTGREGLLRQLGSAEIVAQVVLARSLRPVKKVVFMGMGEPAHNLDNVLEAIDLLGTAGGIGHKNLVFSTVGDYRVFERLPRQRVKPALALSLHTTRADLRAQLLPRAPQIAPQELVELGERYARSTGYPIQYQWTLIEGVNDSPEEMDGIVRLLRGKYALMNLIPYNSVPELEFRRPGREAAVALAAYLHRHGVLAKLRQSAGQDVEGGCGQLRARVVKMDRRPRTARATPPTA.

Glu-89 serves as the catalytic Proton acceptor. The Radical SAM core domain occupies 92 to 318 (LLLRDGLCVS…AKLRQSAGQD (227 aa)). The cysteines at positions 99 and 323 are disulfide-linked. [4Fe-4S] cluster-binding residues include Cys-106, Cys-110, and Cys-113. S-adenosyl-L-methionine-binding positions include 151–152 (GE), Ser-181, 204–206 (SLH), and Asn-280. The active-site S-methylcysteine intermediate is the Cys-323.

The protein belongs to the radical SAM superfamily. RlmN family. Requires [4Fe-4S] cluster as cofactor.

The protein localises to the cytoplasm. This is Probable RNA methyltransferase azo0122 from Azoarcus sp. (strain BH72).